Reading from the N-terminus, the 174-residue chain is NADH-ubiquinone oxidoreductase chain 6 (174 aa).

5 helical membrane-spanning segments follow: residues 1–21 (MTYV…GFSS), 24–44 (SPIY…MIIL), 47–67 (GGAY…MVVF), 86–106 (FEVL…VLWV), and 151–171 (WLVV…IEIT).

Belongs to the complex I subunit 6 family. As to quaternary structure, core subunit of respiratory chain NADH dehydrogenase (Complex I) which is composed of 45 different subunits.

It is found in the mitochondrion inner membrane. It catalyses the reaction a ubiquinone + NADH + 5 H(+)(in) = a ubiquinol + NAD(+) + 4 H(+)(out). In terms of biological role, core subunit of the mitochondrial membrane respiratory chain NADH dehydrogenase (Complex I) which catalyzes electron transfer from NADH through the respiratory chain, using ubiquinone as an electron acceptor. Essential for the catalytic activity and assembly of complex I. The chain is NADH-ubiquinone oxidoreductase chain 6 (MT-ND6) from Papio hamadryas (Hamadryas baboon).